Reading from the N-terminus, the 265-residue chain is Protein synthesis inhibitor PD-S2 (265 aa).

Intrachain disulfides connect C34/C262 and C88/C110. Residue N120 is glycosylated (N-linked (GlcNAc...) asparagine).

It belongs to the ribosome-inactivating protein family. Type 1 RIP subfamily. Post-translationally, glycosylated. As to expression, seeds.

It catalyses the reaction Endohydrolysis of the N-glycosidic bond at one specific adenosine on the 28S rRNA.. In terms of biological role, inhibits protein synthesis in animal cells. Useful as immunotoxin for pharmacological applications. This is Protein synthesis inhibitor PD-S2 from Phytolacca dioica (Bella sombra tree).